A 410-amino-acid polypeptide reads, in one-letter code: UPF0761 membrane protein Csal_1895 (410 aa).

A run of 6 helical transmembrane segments spans residues 43–63 (LFAVVPFMTVLYAMLSAIPSF), 99–119 (SLTLIGLMFLLVTAVMMMVTV), 139–159 (FLLYWAVLTLGPLLLGSGFLL), 180–200 (VAFLRLLPLTLSFTAFVFIYM), 212–232 (AVAGAGLAALALELAKGAFSL), and 247–267 (FAAVPLFLVWVFLSWAIVLVG).

It belongs to the UPF0761 family.

The protein localises to the cell inner membrane. In Chromohalobacter salexigens (strain ATCC BAA-138 / DSM 3043 / CIP 106854 / NCIMB 13768 / 1H11), this protein is UPF0761 membrane protein Csal_1895.